The primary structure comprises 191 residues: Leucyl/phenylalanyl-tRNA--protein transferase (191 aa).

This sequence belongs to the L/F-transferase family.

The protein resides in the cytoplasm. The enzyme catalyses N-terminal L-lysyl-[protein] + L-leucyl-tRNA(Leu) = N-terminal L-leucyl-L-lysyl-[protein] + tRNA(Leu) + H(+). The catalysed reaction is N-terminal L-arginyl-[protein] + L-leucyl-tRNA(Leu) = N-terminal L-leucyl-L-arginyl-[protein] + tRNA(Leu) + H(+). It carries out the reaction L-phenylalanyl-tRNA(Phe) + an N-terminal L-alpha-aminoacyl-[protein] = an N-terminal L-phenylalanyl-L-alpha-aminoacyl-[protein] + tRNA(Phe). Its function is as follows. Functions in the N-end rule pathway of protein degradation where it conjugates Leu, Phe and, less efficiently, Met from aminoacyl-tRNAs to the N-termini of proteins containing an N-terminal arginine or lysine. This is Leucyl/phenylalanyl-tRNA--protein transferase from Nostoc sp. (strain PCC 7120 / SAG 25.82 / UTEX 2576).